Consider the following 401-residue polypeptide: 8-amino-7-oxononanoate synthase (401 aa).

Residue Arg-24 participates in substrate binding. 111–112 (GF) is a binding site for pyridoxal 5'-phosphate. His-137 lines the substrate pocket. Positions 183, 211, and 240 each coordinate pyridoxal 5'-phosphate. N6-(pyridoxal phosphate)lysine is present on Lys-243. Substrate is bound at residue Thr-357.

The protein belongs to the class-II pyridoxal-phosphate-dependent aminotransferase family. BioF subfamily. As to quaternary structure, homodimer. Pyridoxal 5'-phosphate serves as cofactor.

It carries out the reaction 6-carboxyhexanoyl-[ACP] + L-alanine + H(+) = (8S)-8-amino-7-oxononanoate + holo-[ACP] + CO2. The protein operates within cofactor biosynthesis; biotin biosynthesis. In terms of biological role, catalyzes the decarboxylative condensation of pimeloyl-[acyl-carrier protein] and L-alanine to produce 8-amino-7-oxononanoate (AON), [acyl-carrier protein], and carbon dioxide. The chain is 8-amino-7-oxononanoate synthase from Xylella fastidiosa (strain M12).